The chain runs to 218 residues: Cytochrome b6 (218 aa).

The helical transmembrane segment at 35–55 (IFYCLGGITLVCFLIQFATGF) threads the bilayer. C38 provides a ligand contact to heme c. The heme b site is built by H89 and H103. A run of 3 helical transmembrane segments spans residues 93 to 113 (ASMMVLMLILHVFRVYLTGGF), 119 to 139 (LTWVTGVTMAVITVSFGVTGY), and 189 to 209 (LHTFVMPWLLAVFMLMHFLMI). 2 residues coordinate heme b: H190 and H205.

It belongs to the cytochrome b family. PetB subfamily. In terms of assembly, the 4 large subunits of the cytochrome b6-f complex are cytochrome b6, subunit IV (17 kDa polypeptide, PetD), cytochrome f and the Rieske protein, while the 4 small subunits are PetG, PetL, PetM and PetN. The complex functions as a dimer. Requires heme b as cofactor. The cofactor is heme c.

It is found in the cellular thylakoid membrane. In terms of biological role, component of the cytochrome b6-f complex, which mediates electron transfer between photosystem II (PSII) and photosystem I (PSI), cyclic electron flow around PSI, and state transitions. In Synechococcus sp. (strain CC9311), this protein is Cytochrome b6.